The primary structure comprises 147 residues: Transcription antitermination protein NusB (147 aa).

Belongs to the NusB family.

Involved in transcription antitermination. Required for transcription of ribosomal RNA (rRNA) genes. Binds specifically to the boxA antiterminator sequence of the ribosomal RNA (rrn) operons. The sequence is that of Transcription antitermination protein NusB from Teredinibacter turnerae (strain ATCC 39867 / T7901).